The following is a 300-amino-acid chain: F-box/LRR-repeat protein 15 (300 aa).

N-acetylmethionine is present on methionine 1. The F-box domain occupies 19-66 (LLDLPWEDVLLPHVLNWVPLRQLLRLQRVSRAFRALVQLHLARLRRFD). The interval 113–269 (NPQLRSVALA…EPSLSRLRKR (157 aa)) is interaction with SMURF1. LRR repeat units follow at residues 141–162 (RLQRISLAHCDWVDGLALRGLA), 167–188 (ALEELDLTACRQLKDEAIVYLA), 194–215 (GLRSLSLAVNANVGDTAVQELA), 220–241 (QLEHLDLTGCLRVGSDGVRTLA), and 246–267 (ALRSLRVRHCHHVAEPSLSRLR).

The protein belongs to the FBXL15 family. Part of the SCF (SKP1-CUL1-F-box) E3 ubiquitin-protein ligase complex SCF(FBXL15) composed of CUL1, SKP1, RBX1 and FBXL15.

It is found in the cytoplasm. It participates in protein modification; protein ubiquitination. Functionally, substrate recognition component of a SCF (SKP1-CUL1-F-box protein) E3 ubiquitin-protein ligase complex which mediates the ubiquitination and subsequent proteasomal degradation of SMURF1, thereby acting as a positive regulator of the BMP signaling pathway. Required for dorsal/ventral pattern formation. Also mediates ubiquitination of SMURF2 and WWP2. Required for bone mass maintenance. This Rattus norvegicus (Rat) protein is F-box/LRR-repeat protein 15 (Fbxl15).